Reading from the N-terminus, the 376-residue chain is Ribosomal RNA large subunit methyltransferase G (376 aa).

This sequence belongs to the methyltransferase superfamily. RlmG family.

Its subcellular location is the cytoplasm. It catalyses the reaction guanosine(1835) in 23S rRNA + S-adenosyl-L-methionine = N(2)-methylguanosine(1835) in 23S rRNA + S-adenosyl-L-homocysteine + H(+). Functionally, specifically methylates the guanine in position 1835 (m2G1835) of 23S rRNA. In Cronobacter sakazakii (strain ATCC BAA-894) (Enterobacter sakazakii), this protein is Ribosomal RNA large subunit methyltransferase G.